A 692-amino-acid chain; its full sequence is Elongation factor G (692 aa).

Positions 8 to 282 (EKVRNIGIAA…AVVDYLPAPT (275 aa)) constitute a tr-type G domain. Residues 17–24 (AHIDAGKT), 81–85 (DTPGH), and 135–138 (NKMD) each bind GTP.

Belongs to the TRAFAC class translation factor GTPase superfamily. Classic translation factor GTPase family. EF-G/EF-2 subfamily.

It localises to the cytoplasm. Its function is as follows. Catalyzes the GTP-dependent ribosomal translocation step during translation elongation. During this step, the ribosome changes from the pre-translocational (PRE) to the post-translocational (POST) state as the newly formed A-site-bound peptidyl-tRNA and P-site-bound deacylated tRNA move to the P and E sites, respectively. Catalyzes the coordinated movement of the two tRNA molecules, the mRNA and conformational changes in the ribosome. This chain is Elongation factor G, found in Trichormus variabilis (strain ATCC 29413 / PCC 7937) (Anabaena variabilis).